A 210-amino-acid chain; its full sequence is MNYSDYFTNRPTDEITRDLVGRPLIYDNGKEKIGGYIVEAEAYMGKNDRTAHSYGGHRSPANEGLYRRGGTIYIYAQRQYFFFDVACQEENEPQGVLIRAIEPIWGIDTMIKNRSGKSGVLLTNGPAKMMQAFGIHDKNWNLHFLSDSPFKIDLEDDHRKPAQEIIADKRVGINQSDPVWANKKLRYYVAGNPYVSDMKKRNYAKNNGWA.

It belongs to the DNA glycosylase MPG family.

This chain is Putative 3-methyladenine DNA glycosylase, found in Lactobacillus helveticus (strain DPC 4571).